Reading from the N-terminus, the 265-residue chain is Hydroxyethylthiazole kinase (265 aa).

Residue methionine 36 participates in substrate binding. ATP-binding residues include lysine 112 and serine 160. Glycine 187 contributes to the substrate binding site.

This sequence belongs to the Thz kinase family. The cofactor is Mg(2+).

The enzyme catalyses 5-(2-hydroxyethyl)-4-methylthiazole + ATP = 4-methyl-5-(2-phosphooxyethyl)-thiazole + ADP + H(+). It functions in the pathway cofactor biosynthesis; thiamine diphosphate biosynthesis; 4-methyl-5-(2-phosphoethyl)-thiazole from 5-(2-hydroxyethyl)-4-methylthiazole: step 1/1. In terms of biological role, catalyzes the phosphorylation of the hydroxyl group of 4-methyl-5-beta-hydroxyethylthiazole (THZ). The chain is Hydroxyethylthiazole kinase from Clostridium perfringens (strain ATCC 13124 / DSM 756 / JCM 1290 / NCIMB 6125 / NCTC 8237 / Type A).